Here is a 208-residue protein sequence, read N- to C-terminus: Ribosomal RNA large subunit methyltransferase E (208 aa).

5 residues coordinate S-adenosyl-L-methionine: G63, W65, D83, D99, and D124. The active-site Proton acceptor is K164.

This sequence belongs to the class I-like SAM-binding methyltransferase superfamily. RNA methyltransferase RlmE family.

The protein resides in the cytoplasm. It catalyses the reaction uridine(2552) in 23S rRNA + S-adenosyl-L-methionine = 2'-O-methyluridine(2552) in 23S rRNA + S-adenosyl-L-homocysteine + H(+). Its function is as follows. Specifically methylates the uridine in position 2552 of 23S rRNA at the 2'-O position of the ribose in the fully assembled 50S ribosomal subunit. This is Ribosomal RNA large subunit methyltransferase E from Salmonella paratyphi A (strain ATCC 9150 / SARB42).